A 265-amino-acid chain; its full sequence is WUSCHEL-related homeobox 3B (265 aa).

The homeobox; WUS-type DNA-binding region spans 4–68 (TPSTRWCPTP…NHKARERQRL (65 aa)). 2 disordered regions span residues 77-107 (QQQY…APPA) and 242-265 (PTKS…TSTN). Positions 254–265 (SSKSSSCSTSTN) are enriched in low complexity.

It belongs to the WUS homeobox family. Predominantly expressed in tissues enriched for shoot meristems and young lateral organ primordia. First expressed in lateral domains of shoot meristems. It is then expressed in the margins of young lateral organ primordia. Not expressed in roots, seedling leaves or fully expanded coleoptiles. Also expressed in vegetative shoot apices (five leaf primordia and the SAM) and in the male inflorescence. Expressed at high level in the female inflorescence.

The protein localises to the nucleus. In terms of biological role, probable transcription factor required to initiate organ founder cells in a lateral domain of shoot meristems. Involved in leaf formation. The sequence is that of WUSCHEL-related homeobox 3B (WOX3B) from Zea mays (Maize).